The primary structure comprises 233 residues: MRNLLPFFTRIPVKGDFERVRNELWALPLLAPLTSALATLVLYLELPLSNVLAILALYFTTGLLHLDGLADWADGVMVKGDRERKIKAMKDLNTGIAGVFAVVMVFLLQVYSLPLLPFYALYLAELNSKFAMLLALATRKPLGQGLGAYFMEGMNGRQLTLGTALYLLLLLPVAYIEPRSISSLLGLLAGAYVIRLSLRNFGGLNGDCIGAVAEITRAGALLGMAVVWVYFGG.

A run of 7 helical transmembrane segments spans residues 24–44 (LWAL…VLYL), 46–66 (LPLS…LLHL), 96–116 (IAGV…LPLL), 117–137 (PFYA…LALA), 158–178 (QLTL…YIEP), 181–198 (ISSL…RLSL), and 209–229 (IGAV…VVWV).

This sequence belongs to the CobS family. Mg(2+) is required as a cofactor.

Its subcellular location is the cell membrane. It carries out the reaction alpha-ribazole + adenosylcob(III)inamide-GDP = adenosylcob(III)alamin + GMP + H(+). It catalyses the reaction alpha-ribazole 5'-phosphate + adenosylcob(III)inamide-GDP = adenosylcob(III)alamin 5'-phosphate + GMP + H(+). It functions in the pathway cofactor biosynthesis; adenosylcobalamin biosynthesis; adenosylcobalamin from cob(II)yrinate a,c-diamide: step 7/7. In terms of biological role, joins adenosylcobinamide-GDP and alpha-ribazole to generate adenosylcobalamin (Ado-cobalamin). Also synthesizes adenosylcobalamin 5'-phosphate from adenosylcobinamide-GDP and alpha-ribazole 5'-phosphate. The polypeptide is Adenosylcobinamide-GDP ribazoletransferase (Thermococcus gammatolerans (strain DSM 15229 / JCM 11827 / EJ3)).